The chain runs to 73 residues: Translation initiation factor IF-1 (73 aa).

An S1-like domain is found at 1–72; it reads MAKEDHIEMA…SKGRIIFRDK (72 aa).

Belongs to the IF-1 family. In terms of assembly, component of the 30S ribosomal translation pre-initiation complex which assembles on the 30S ribosome in the order IF-2 and IF-3, IF-1 and N-formylmethionyl-tRNA(fMet); mRNA recruitment can occur at any time during PIC assembly.

It localises to the cytoplasm. One of the essential components for the initiation of protein synthesis. Stabilizes the binding of IF-2 and IF-3 on the 30S subunit to which N-formylmethionyl-tRNA(fMet) subsequently binds. Helps modulate mRNA selection, yielding the 30S pre-initiation complex (PIC). Upon addition of the 50S ribosomal subunit IF-1, IF-2 and IF-3 are released leaving the mature 70S translation initiation complex. The chain is Translation initiation factor IF-1 from Legionella pneumophila (strain Paris).